Consider the following 333-residue polypeptide: Adenosine deaminase (333 aa).

Residues H12 and H14 each coordinate Zn(2+). H14, D16, and G170 together coordinate substrate. Zn(2+) is bound at residue H197. E200 (proton donor) is an active-site residue. Residue D278 participates in Zn(2+) binding. D279 serves as a coordination point for substrate.

It belongs to the metallo-dependent hydrolases superfamily. Adenosine and AMP deaminases family. Adenosine deaminase subfamily. Zn(2+) serves as cofactor.

It catalyses the reaction adenosine + H2O + H(+) = inosine + NH4(+). The enzyme catalyses 2'-deoxyadenosine + H2O + H(+) = 2'-deoxyinosine + NH4(+). Catalyzes the hydrolytic deamination of adenosine and 2-deoxyadenosine. This chain is Adenosine deaminase, found in Salmonella agona (strain SL483).